The sequence spans 1382 residues: Hepatocyte growth factor receptor (1382 aa).

The first 24 residues, 1 to 24 (MKASAVLAPGILALLFTLVQGSDG), serve as a signal peptide directing secretion. The Extracellular segment spans residues 25–935 (ECHEALAKSE…VQPDQNFTGL (911 aa)). The Sema domain occupies 27-516 (HEALAKSEMN…TGKRITKIPL (490 aa)). Asn-45, Asn-100, and Asn-106 each carry an N-linked (GlcNAc...) asparagine glycan. Disulfide bonds link Cys-95-Cys-101, Cys-98-Cys-160, Cys-133-Cys-141, and Cys-173-Cys-176. N-linked (GlcNAc...) asparagine glycans are attached at residues Asn-203 and Asn-359. 2 disulfide bridges follow: Cys-299–Cys-364 and Cys-386–Cys-398. Residues Asn-400 and Asn-406 are each glycosylated (N-linked (GlcNAc...) asparagine). Disulfide bonds link Cys-521/Cys-539, Cys-527/Cys-562, Cys-530/Cys-546, and Cys-542/Cys-552. IPT/TIG domains follow at residues 564–656 (PAIH…FSYV), 658–740 (PVIT…FSYQ), and 743–837 (PVVY…LIYV). Residue Thr-583 is glycosylated (O-linked (Man) threonine). N-linked (GlcNAc...) asparagine glycosylation is found at Asn-608 and Asn-636. O-linked (Man) threonine glycans are attached at residues Thr-677 and Thr-762. Residues Asn-786, Asn-880, and Asn-931 are each glycosylated (N-linked (GlcNAc...) asparagine). The chain crosses the membrane as a helical span at residues 936 to 956 (IVGVVSISIILLLLLGLFLWM). Residues 957–1382 (KKRKQIKDLG…QDNINGEVDT (426 aa)) are Cytoplasmic-facing. A Phosphoserine modification is found at Ser-967. A Phosphothreonine modification is found at Thr-978. A phosphoserine mark is found at Ser-991, Ser-998, and Ser-1001. Phosphotyrosine is present on Tyr-1004. The Protein kinase domain maps to 1079–1346 (VHFNEVIGRG…RISAIFSTFI (268 aa)). Residues 1085 to 1093 (IGRGHFGCV) and Lys-1111 each bind ATP. The active-site Proton acceptor is Asp-1205. The segment at 1213–1382 (LDEKFTVKVA…QDNINGEVDT (170 aa)) is interaction with RANBP9. Tyr-1231 is subject to Phosphotyrosine. Tyr-1235 and Tyr-1236 each carry phosphotyrosine; by autocatalysis. At Thr-1290 the chain carries Phosphothreonine. The tract at residues 1321–1360 (WHPKAEMRPSFSELVSRISAIFSTFIGEHYVHVNATYVNV) is interaction with MUC20. Phosphotyrosine; by autocatalysis occurs at positions 1350 and 1357. Tyr-1366 bears the Phosphotyrosine mark.

It belongs to the protein kinase superfamily. Tyr protein kinase family. As to quaternary structure, heterodimer made of an alpha chain (50 kDa) and a beta chain (145 kDa) which are disulfide linked. Binds PLXNB1. Interacts when phosphorylated with downstream effectors including STAT3, PIK3R1, SRC, PCLG1, GRB2 and GAB1. Interacts with SPSB1, SPSB2 and SPSB4. Interacts with INPP5D/SHIP1. When phosphorylated at Tyr-1357, interacts with INPPL1/SHIP2. Interacts with RANBP9 and RANBP10, as well as SPSB1, SPSB2, SPSB3 and SPSB4. SPSB1 binding occurs in the presence and in the absence of HGF, however HGF treatment has a positive effect on this interaction. Interacts with MUC20; prevents interaction with GRB2 and suppresses hepatocyte growth factor-induced cell proliferation. Interacts with GRB10. Interacts with PTPN1 and PTPN2. Interacts with HSP90AA1 and HSP90AB1; the interaction suppresses MET kinase activity. Interacts with tensin TNS3. Interacts (when phosphorylated) with tensin TNS4 (via SH2 domain); the interaction increases MET protein stability by inhibiting MET endocytosis and subsequent lysosomal degradation. Post-translationally, autophosphorylated in response to ligand binding on Tyr-1235 and Tyr-1236 in the kinase domain leading to further phosphorylation of Tyr-1350 and Tyr-1357 in the C-terminal multifunctional docking site. Dephosphorylated by PTPRJ at Tyr-1350 and Tyr-1366. Dephosphorylated by PTPN1 and PTPN2. In terms of processing, ubiquitinated. Ubiquitination by CBL regulates the receptor stability and activity through proteasomal degradation. O-mannosylation of IPT/TIG domains by TMEM260 is required for protein maturation. O-mannosylated residues are composed of single mannose glycans that are not elongated or modified.

Its subcellular location is the membrane. The catalysed reaction is L-tyrosyl-[protein] + ATP = O-phospho-L-tyrosyl-[protein] + ADP + H(+). Its activity is regulated as follows. In its inactive state, the C-terminal tail interacts with the catalytic domain and inhibits the kinase activity. Upon ligand binding, the C-terminal tail is displaced and becomes phosphorylated, thus increasing the kinase activity. Receptor tyrosine kinase that transduces signals from the extracellular matrix into the cytoplasm by binding to hepatocyte growth factor/HGF ligand. Regulates many physiological processes including proliferation, scattering, morphogenesis and survival. Ligand binding at the cell surface induces autophosphorylation of MET on its intracellular domain that provides docking sites for downstream signaling molecules. Following activation by ligand, interacts with the PI3-kinase subunit PIK3R1, PLCG1, SRC, GRB2, STAT3 or the adapter GAB1. Recruitment of these downstream effectors by MET leads to the activation of several signaling cascades including the RAS-ERK, PI3 kinase-AKT, or PLCgamma-PKC. The RAS-ERK activation is associated with the morphogenetic effects while PI3K/AKT coordinates prosurvival effects. During embryonic development, MET signaling plays a role in gastrulation, development and migration of muscles and neuronal precursors, angiogenesis and kidney formation. In adults, participates in wound healing as well as organ regeneration and tissue remodeling. Also promotes differentiation and proliferation of hematopoietic cells. This is Hepatocyte growth factor receptor (MET) from Microcebus murinus (Gray mouse lemur).